The primary structure comprises 104 residues: Met repressor (104 aa).

Belongs to the MetJ family. Homodimer.

Its subcellular location is the cytoplasm. This regulatory protein, when combined with SAM (S-adenosylmethionine) represses the expression of the methionine regulon and of enzymes involved in SAM synthesis. The sequence is that of Met repressor from Shewanella oneidensis (strain ATCC 700550 / JCM 31522 / CIP 106686 / LMG 19005 / NCIMB 14063 / MR-1).